Consider the following 82-residue polypeptide: Large ribosomal subunit protein bL27c (82 aa).

The tract at residues M1–G22 is disordered.

The protein belongs to the bacterial ribosomal protein bL27 family.

The protein resides in the plastid. The protein localises to the chloroplast. This is Large ribosomal subunit protein bL27c (rpl27) from Chrysotila carterae (Marine alga).